Consider the following 469-residue polypeptide: Chromosomal replication initiator protein DnaA (469 aa).

A domain I, interacts with DnaA modulators region spans residues 1–83 (MSEWDYKIFW…KKISIDFIIK (83 aa)). Positions 83–128 (KPNTSEDLSKAENEGGNDKKEDAAKPSSAESKKKSVKTEGGRGQHP) are domain II. The interval 89–131 (DLSKAENEGGNDKKEDAAKPSSAESKKKSVKTEGGRGQHPDLR) is disordered. Residues 129–344 (DLRPEYNFED…AALTKLIAYT (216 aa)) are domain III, AAA+ region. ATP contacts are provided by glycine 173, glycine 175, lysine 176, and threonine 177. Residues 345–469 (ELTKKTMDEA…RNTIKENTNK (125 aa)) form a domain IV, binds dsDNA region.

Belongs to the DnaA family. As to quaternary structure, oligomerizes as a right-handed, spiral filament on DNA at oriC.

Its subcellular location is the cytoplasm. In terms of biological role, plays an essential role in the initiation and regulation of chromosomal replication. ATP-DnaA binds to the origin of replication (oriC) to initiate formation of the DNA replication initiation complex once per cell cycle. Binds the DnaA box (a 9 base pair repeat at the origin) and separates the double-stranded (ds)DNA. Forms a right-handed helical filament on oriC DNA; dsDNA binds to the exterior of the filament while single-stranded (ss)DNA is stabiized in the filament's interior. The ATP-DnaA-oriC complex binds and stabilizes one strand of the AT-rich DNA unwinding element (DUE), permitting loading of DNA polymerase. After initiation quickly degrades to an ADP-DnaA complex that is not apt for DNA replication. Binds acidic phospholipids. This Treponema denticola (strain ATCC 35405 / DSM 14222 / CIP 103919 / JCM 8153 / KCTC 15104) protein is Chromosomal replication initiator protein DnaA.